The primary structure comprises 426 residues: Vacuole membrane protein hfl11 (426 aa).

Transmembrane regions (helical) follow at residues 39–59, 73–93, 133–153, 172–192, and 223–243; these read SVVRILMMIVIYSSVSFLSVY, IYEAFALYCFFCLLIDYLGGE, GILQYTWLKPFLVIAVLLTKV, IGLVYNISITLSLYSLTTFWV, and VLSITNWLGLLNGTGWIYSLL. Ser-364 is subject to Phosphoserine. The tract at residues 386-409 is ATG8-interacting region; sequence LQFEIDDEMEPLYNQAKQMRYGDY.

This sequence belongs to the TMEM184 family. As to quaternary structure, interacts with atg8.

Its subcellular location is the vacuole membrane. In terms of biological role, vacuole membrane protein that recruits ATG8 to facilitate the degradation of vacuolar integral membrane proteins during early-stationary vacuole turnover (EVT) when cells enter stationary phase. This chain is Vacuole membrane protein hfl11, found in Schizosaccharomyces pombe (strain 972 / ATCC 24843) (Fission yeast).